A 205-amino-acid polypeptide reads, in one-letter code: Small ribosomal subunit protein uS4 (205 aa).

Positions methionine 1 to glycine 16 are enriched in basic and acidic residues. A disordered region spans residues methionine 1–serine 46. In terms of domain architecture, S4 RNA-binding spans serine 94–valine 157.

It belongs to the universal ribosomal protein uS4 family. Part of the 30S ribosomal subunit. Contacts protein S5. The interaction surface between S4 and S5 is involved in control of translational fidelity.

Its function is as follows. One of the primary rRNA binding proteins, it binds directly to 16S rRNA where it nucleates assembly of the body of the 30S subunit. With S5 and S12 plays an important role in translational accuracy. This Bartonella tribocorum (strain CIP 105476 / IBS 506) protein is Small ribosomal subunit protein uS4.